Consider the following 94-residue polypeptide: C-C motif chemokine 17 (94 aa).

Residues 1–23 (MAPLKMLALVILLLGASLQHIHA) form the signal peptide. 2 cysteine pairs are disulfide-bonded: cysteine 33-cysteine 57 and cysteine 34-cysteine 73.

This sequence belongs to the intercrine beta (chemokine CC) family.

The protein localises to the secreted. Its function is as follows. Chemokine, which displays chemotactic activity for T lymphocytes, preferentially Th2 cells, but not monocytes or granulocytes. Therefore plays an important role in a wide range of inflammatory and immunological processes. Acts by binding to CCR4 at T-cell surface. Mediates GM-CSF/CSF2-driven pain and inflammation. In the brain, required to maintain the typical, highly branched morphology of hippocampal microglia under homeostatic conditions. May be important for the appropriate adaptation of microglial morphology and synaptic plasticity to acute lipopolysaccharide (LPS)-induced neuroinflammation. Plays a role in wound healing, mainly by inducing fibroblast migration into the wound. The chain is C-C motif chemokine 17 (CCL17) from Macaca mulatta (Rhesus macaque).